We begin with the raw amino-acid sequence, 412 residues long: BSD domain-containing protein 1 (412 aa).

In terms of domain architecture, BSD spans 145 to 197 (WLSTFSLEERKAEISELLVSSPAIRALYTKMVPAAVAHAEFWQRYFYKVFQLE). The span at 208-217 (QRAEQTDHSE) shows a compositional bias: basic and acidic residues. Disordered regions lie at residues 208-227 (QRAE…EDEE), 253-272 (VTVA…ASLS), and 298-412 (ESVT…ENWE). Composition is skewed to polar residues over residues 259-272 (PESS…ASLS) and 298-308 (ESVTIRVTQPS). Phosphoserine is present on S308. Basic and acidic residues predominate over residues 328–349 (PEERPAPREETAREDMAQDLRV). The span at 353–372 (NSDSGKSTPSNNGKKGSSTD) shows a compositional bias: polar residues. 2 stretches are compositionally biased toward acidic residues: residues 373-390 (VSED…EEEV) and 400-412 (TEEL…ENWE).

The polypeptide is BSD domain-containing protein 1 (bsdc1) (Danio rerio (Zebrafish)).